We begin with the raw amino-acid sequence, 406 residues long: Putative cyclin-F3-2 (406 aa).

Residues 1–107 (MARPRTRSVA…PGAAGGPWQL (107 aa)) are disordered. 2 stretches are compositionally biased toward low complexity: residues 11–21 (RMEATAAAAAA) and 29–57 (NPDG…NAGE).

This sequence belongs to the cyclin family. Cyclin F subfamily.

This is Putative cyclin-F3-2 (CYCF3-2) from Oryza sativa subsp. japonica (Rice).